A 338-amino-acid chain; its full sequence is Transcription factor GRA2 (338 aa).

Disordered regions lie at residues 171–230 (CQDS…PHYA) and 256–277 (TQHE…DGGS). A compositionally biased stretch (polar residues) spans 174–203 (SGVSQPSNLADDTLGQGQPVSTVVQPQHPG). Positions 223–236 (KRQRPHYAIEKRYR) are basic motif. One can recognise a bHLH domain in the interval 223–303 (KRQRPHYAIE…NQATLCIRQL (81 aa)). Positions 237-303 (AGLQERFEAL…NQATLCIRQL (67 aa)) are helix-loop-helix motif.

The protein resides in the nucleus. In terms of biological role, transcription factor that specifically regulates the expression of the gene cluster that mediates the biosynthesis of gramillins A and B, bicyclic lipopeptides that induce cell death in maize leaves but not in wheat leaves. This chain is Transcription factor GRA2 (GRA2), found in Gibberella zeae (strain ATCC MYA-4620 / CBS 123657 / FGSC 9075 / NRRL 31084 / PH-1) (Wheat head blight fungus).